A 122-amino-acid polypeptide reads, in one-letter code: Basic phospholipase A2 (122 aa).

7 disulfide bridges follow: C26-C115, C28-C44, C43-C95, C49-C122, C50-C88, C57-C81, and C75-C86. 3 residues coordinate Ca(2+): Y27, G29, and G31. H47 is an active-site residue. Position 48 (D48) interacts with Ca(2+). D89 is an active-site residue.

It belongs to the phospholipase A2 family. Group II subfamily. D49 sub-subfamily. As to quaternary structure, homodimer. Ca(2+) serves as cofactor. As to expression, expressed by the venom gland.

Its subcellular location is the secreted. It carries out the reaction a 1,2-diacyl-sn-glycero-3-phosphocholine + H2O = a 1-acyl-sn-glycero-3-phosphocholine + a fatty acid + H(+). In terms of biological role, snake venom phospholipase A2 (PLA2) that inhibits neuromuscular transmission by blocking acetylcholine release from the nerve termini. PLA2 catalyzes the calcium-dependent hydrolysis of the 2-acyl groups in 3-sn-phosphoglycerides. The protein is Basic phospholipase A2 of Gloydius blomhoffii (Mamushi).